We begin with the raw amino-acid sequence, 492 residues long: Alpha-2-antiplasmin (492 aa).

An N-terminal signal peptide occupies residues 1 to 22 (MALLWGLLALILSCLSSLCSAQ). A propeptide spanning residues 23 to 40 (FSPVSTMEPLDLQLMDGQ) is cleaved from the precursor. The disordered stretch occupies residues 56–76 (QEPGGQIAPKKAPEDCKLSPT). A disulfide bridge connects residues Cys-71 and Cys-144. N-linked (GlcNAc...) asparagine glycosylation is found at Asn-127, Asn-249, Asn-296, Asn-310, and Asn-317. The segment at 433-492 (SVRNPNPGAQPERKEQQDSPDGKDSFQDHKGLPRGDKPFDPDLKLGPPSEEDYAQPSSPK) is disordered. Positions 443-475 (PERKEQQDSPDGKDSFQDHKGLPRGDKPFDPDL) are enriched in basic and acidic residues. Tyr-485 is modified (sulfotyrosine).

This sequence belongs to the serpin family. Forms protease inhibiting heterodimer with TMPRSS7. In terms of processing, proteolytically cleaved at Pro-31 by both the prolyl endopeptidase FAP form and antiplasmin-cleaving enzyme FAP soluble form to generate mature alpha-2-antiplasmin. In terms of tissue distribution, expressed by the liver and secreted in plasma.

Its subcellular location is the secreted. Serine protease inhibitor. The major targets of this inhibitor are plasmin and trypsin, but it also inactivates matriptase-3/TMPRSS7 and chymotrypsin. The sequence is that of Alpha-2-antiplasmin (SERPINF2) from Bos taurus (Bovine).